The sequence spans 460 residues: Hemopexin (460 aa).

Positions methionine 1 to alanine 23 are cleaved as a signal peptide. N-linked (GlcNAc...) asparagine glycans are attached at residues asparagine 38 and asparagine 64. 3 disulfide bridges follow: cysteine 50/cysteine 230, cysteine 148/cysteine 153, and cysteine 187/cysteine 199. 4 Hemopexin repeats span residues alanine 53 to proline 93, valine 94 to isoleucine 138, proline 139 to alanine 183, and valine 184 to cysteine 230. A heme-binding site is contributed by histidine 79. Heme is bound at residue histidine 149. Asparagine 186 carries N-linked (GlcNAc...) asparagine glycosylation. Histidine 235 lines the heme pocket. Residues asparagine 240 and asparagine 246 are each glycosylated (N-linked (GlcNAc...) asparagine). 3 disulfide bridges follow: cysteine 255–cysteine 458, cysteine 364–cysteine 406, and cysteine 416–cysteine 433. 4 Hemopexin repeats span residues alanine 257–glycine 302, proline 303–proline 350, leucine 355–leucine 394, and histidine 398–glutamine 448. Histidine 291 contributes to the heme binding site.

Belongs to the hemopexin family. In terms of tissue distribution, expressed by the liver and secreted in plasma.

Its subcellular location is the secreted. In terms of biological role, binds heme and transports it to the liver for breakdown and iron recovery, after which the free hemopexin returns to the circulation. This is Hemopexin (Hpx) from Rattus norvegicus (Rat).